Reading from the N-terminus, the 1235-residue chain is N-acetylglucosamine-1-phosphotransferase subunits alpha/beta (1235 aa).

A helical membrane pass occupies residues 22-42 (VCFVGVVVTIVSAFQFGEVVL). Asn-83, Asn-114, Asn-148, and Asn-179 each carry an N-linked (GlcNAc...) asparagine glycan. Disulfide bonds link Cys-438–Cys-461, Cys-452–Cys-468, Cys-505–Cys-528, and Cys-519–Cys-535. LNR repeat units follow at residues 438 to 473 (CAEG…GNTA) and 505 to 545 (CNQG…ELYK). Ca(2+) contacts are provided by Asp-449, Asp-464, Asp-467, Asp-516, Asp-531, and Asp-534. Residues Asn-614 and Asn-729 are each glycosylated (N-linked (GlcNAc...) asparagine). One can recognise a DMAP1-binding domain in the interval 699-823 (NISLLPKEAQ…AQPTLGVTVS (125 aa)). Disordered regions lie at residues 751–783 (QART…HRSE) and 830–850 (LIVP…AEGN). Over residues 837 to 848 (HLPKEEESDRAE) the composition is skewed to basic and acidic residues. Residues 984–1019 (VQPLNISQVFHEVDTDQSGVLSDREIRTLATRIHDL) form the EF-hand domain. Asn-988 carries an N-linked (GlcNAc...) asparagine glycan. Ca(2+)-binding residues include Asp-997, Asp-999, Ser-1001, and Glu-1008. The N-linked (GlcNAc...) asparagine glycan is linked to Asn-1108. The helical transmembrane segment at 1194–1214 (VLATLIIFTIFSFFAEQIIAL) threads the bilayer.

This sequence belongs to the stealth family. As to quaternary structure, hexamer of two alpha, two beta and two gamma (GNPTG) subunits; disulfide-linked. The alpha and/or the beta subunits of the enzyme constitute the catalytic subunits. Interacts with LYSET; facilitates proper localization of GNPTAB. Post-translationally, the alpha- and beta-subunits are generated by a proteolytic cleavage by MBTPS1 protease at the Lys-907-Asp-908 bond.

It is found in the golgi apparatus membrane. It carries out the reaction N(4)-[alpha-D-mannosyl-(1-&gt;2)-alpha-D-mannosyl-(glycan)]-L-asparaginyl-[protein] + UDP-N-acetyl-alpha-D-glucosamine = N(4)-[6-(N-acetyl-alpha-D-glucosaminyl-1-phospho)-alpha-D-mannosyl-(1-&gt;2)-alpha-D-mannosyl-(glycan)]-L-asparaginyl-[protein] + UMP + H(+). In terms of biological role, catalyzes the formation of mannose 6-phosphate (M6P) markers on high mannose type oligosaccharides in the Golgi apparatus. M6P residues are required to bind to the M6P receptors (MPR), which mediate the vesicular transport of lysosomal enzymes to the endosomal/prelysosomal compartment. The chain is N-acetylglucosamine-1-phosphotransferase subunits alpha/beta (Gnptab) from Mus musculus (Mouse).